Reading from the N-terminus, the 447-residue chain is Trigger factor (447 aa).

A PPIase FKBP-type domain is found at Gly-174–Pro-261.

This sequence belongs to the FKBP-type PPIase family. Tig subfamily.

The protein localises to the cytoplasm. It carries out the reaction [protein]-peptidylproline (omega=180) = [protein]-peptidylproline (omega=0). Its function is as follows. Involved in protein export. Acts as a chaperone by maintaining the newly synthesized protein in an open conformation. Functions as a peptidyl-prolyl cis-trans isomerase. This chain is Trigger factor, found in Synechococcus sp. (strain CC9902).